The following is a 427-amino-acid chain: MTWFIDRRLNGKNKSMVNRQRFLRRYKAQIKQSISEAINKRSVTDVDSGESVSIPTEDISEPMFHQGRGGLRHRVHPGNDHFVQNDRIERPQGGGGGSGSGQGQASQDGEGQDEFVFQISKDEYLDLLFEDLALPNLKQNQQRQLTEYKTHRAGYTANGVPANISVVRSLQNSLARRTAMTAGKRRELHALEENLAIISNSEPAQLLEEERLRKEIAELRAKIERVPFIDTFDLRYKNYEKRPDPSSQAVMFCLMDVSGSMDQSTKDMAKRFYVLLYLFLSRTYKNVEVVYIRHHTQAKEVDEHEFFYSQETGGTIVSSALKLMDEVVKERYNPAQWNIYAAQASDGDNWADDSPLCHEILAKKLLPVVRYYSYIEITRRAHQTLWREYEHLQSTFDNFAMQHIRDQDDIYPVFRELFHKQNATAKD.

Positions 79–90 are enriched in basic and acidic residues; the sequence is NDHFVQNDRIER. Residues 79–110 form a disordered region; it reads NDHFVQNDRIERPQGGGGGSGSGQGQASQDGE. The span at 92 to 102 shows a compositional bias: gly residues; it reads QGGGGGSGSGQ.

The protein belongs to the UPF0229 family.

This chain is UPF0229 protein YeaH, found in Escherichia coli O9:H4 (strain HS).